A 265-amino-acid polypeptide reads, in one-letter code: Gap junction beta-4 protein (265 aa).

The stretch at 2–13 is an intramembrane region; the sequence is NWGFLQGILSGV. Residues 14–20 lie on the Cytoplasmic side of the membrane; that stretch reads NKYSTAL. The chain crosses the membrane as a helical span at residues 21–40; sequence GRIWLSVVFIFRVLVYVVAA. The Extracellular segment spans residues 41–73; the sequence is EEVWDDEQKDFICNTKQPGCPNVCYDEFFPVSH. 3 cysteine pairs are disulfide-bonded: cysteine 53-cysteine 175, cysteine 60-cysteine 169, and cysteine 64-cysteine 164. Residues 74–94 form a helical membrane-spanning segment; the sequence is VRLWALQLILVTCPSLLVVMH. The Cytoplasmic segment spans residues 95–130; it reads VAYREERERKHRLKHGPDAPALYSNLSKKRGGLWWT. A helical transmembrane segment spans residues 131-151; it reads YLLSLIFKAAVDSGFLYIFHC. Topologically, residues 152-184 are extracellular; the sequence is IYKDYDMPRVVACSVQPCPHTVDCYISRPTEKK. Residues 185-205 form a helical membrane-spanning segment; that stretch reads VFTYFMVVTAAICILLNLSEV. Topologically, residues 206-265 are cytoplasmic; that stretch reads AYLVGKRCMEVFRPRRQKTSRRHQLPDTCPPYVISKGHPQDESTVLTKAGMATVDAGVYP.

It belongs to the connexin family. Beta-type (group I) subfamily. A hemichannel or connexon is composed of a hexamer of connexins. A functional gap junction is formed by the apposition of two hemichannels. Forms heteromeric channels with GJB2. In terms of tissue distribution, detected in adult heart, kidney, skin and cochlea, where it is detected in spiral ganglion, stria vascularis, spiral limbus and spiral ligament (at protein level).

It is found in the cell membrane. The protein localises to the cell junction. The protein resides in the gap junction. Structural component of gap junctions. Gap junctions are dodecameric channels that connect the cytoplasm of adjoining cells. They are formed by the docking of two hexameric hemichannels, one from each cell membrane. Small molecules and ions diffuse from one cell to a neighboring cell via the central pore. The protein is Gap junction beta-4 protein (Gjb4) of Rattus norvegicus (Rat).